Here is a 373-residue protein sequence, read N- to C-terminus: Cytoplasmic tRNA 2-thiolation protein 1 (373 aa).

The protein belongs to the TtcA family. CTU1/NCS6/ATPBD3 subfamily.

It is found in the cytoplasm. The protein operates within tRNA modification; 5-methoxycarbonylmethyl-2-thiouridine-tRNA biosynthesis. Its function is as follows. Plays a central role in 2-thiolation of mcm(5)S(2)U at tRNA wobble positions of tRNA(Lys), tRNA(Glu) and tRNA(Gln). Directly binds tRNAs and probably acts by catalyzing adenylation of tRNAs, an intermediate required for 2-thiolation. It is unclear whether it acts as a sulfurtransferase that transfers sulfur from thiocarboxylated URM1 onto the uridine of tRNAs at wobble position. The protein is Cytoplasmic tRNA 2-thiolation protein 1 of Caenorhabditis elegans.